A 639-amino-acid chain; its full sequence is Chaperone protein DnaK (639 aa).

T198 is modified (phosphothreonine; by autocatalysis). Residues 605 to 624 (SQAQGGAETNAGKQANAAAD) form a disordered region.

The protein belongs to the heat shock protein 70 family.

Acts as a chaperone. The sequence is that of Chaperone protein DnaK from Shewanella putrefaciens (strain CN-32 / ATCC BAA-453).